Here is a 207-residue protein sequence, read N- to C-terminus: Hemin/hemoglobin-binding protein 1 (207 aa).

A signal peptide spans 1–27 (MKKVLVFAAFIVLFSFSFLSTGLTAQA). The NEAT domain occupies 29-148 (LKDGTYSVDY…RFDEGSAKAL (120 aa)). Residues 151-178 (AVKSSDNNTTTPATKSDSSNKVTNPKSS) form a disordered region. The segment covering 154 to 178 (SSDNNTTTPATKSDSSNKVTNPKSS) has biased composition (polar residues). Residues 174 to 178 (NPKSS) carry the NPKXZ sorting signal motif. Position 177 is a murein peptidoglycan amidated serine (serine 177). The propeptide at 178–207 (SDSSQMFLYGIIFVATGAGLILLKRRAIFK) is removed by sortase B.

It is found in the secreted. The protein localises to the cell wall. In terms of biological role, binds both host hemin and hemoglobin with affinity in the nanomolar range and presumably directs it to membrane transporters. The chain is Hemin/hemoglobin-binding protein 1 from Listeria monocytogenes serovar 1/2a (strain ATCC BAA-679 / EGD-e).